Here is a 199-residue protein sequence, read N- to C-terminus: uncharacterized protein (199 aa).

Positions 71 to 104 form a coiled coil; the sequence is RANATNKLTVIAEQIQHLQEQARKVLEDARRDAD.

This is an uncharacterized protein from Mus musculus (Mouse).